A 747-amino-acid chain; its full sequence is Protein FAM83C (747 aa).

Positions 1–309 (MFGGPGPGVL…LYAESQPVEG (309 aa)) are DUF1669. Disordered regions lie at residues 322–352 (LRPPPVALAFRPDVPSPTSSLPSSTSLSSIK), 374–412 (TGVVSSSLGPARREASGQPSLHRQLSDPNHGSPPGLYRA), 462–484 (LSRFPENGLPGSQEPSPLRGRWV), 517–550 (AREVGDPDSGVTPNSGPLRPGEQAPEDRRLSPSQ), 588–633 (NQSR…LGHS), 646–672 (GEGPGPNGLPISSPARTAGAGSGDEKR), and 692–715 (ARQGTEPGGPKGGHLNGGNSDLVR). Residues 328-350 (ALAFRPDVPSPTSSLPSSTSLSS) show a composition bias toward low complexity. Over residues 390-402 (GQPSLHRQLSDPN) the composition is skewed to polar residues. Residues 697–707 (EPGGPKGGHLN) are compositionally biased toward gly residues.

This sequence belongs to the FAM83 family. In terms of assembly, may interact with RAF1. Phosphorylated in vitro by CSNK1A1.

The protein resides in the cytoplasm. May play a role in MAPK signaling. The protein is Protein FAM83C of Homo sapiens (Human).